The chain runs to 366 residues: Carbamoyl phosphate synthase small chain (366 aa).

The CPSase stretch occupies residues 1 to 171 (MQSKRYLVLE…KTPYVSTGKD (171 aa)). L-glutamine-binding residues include Ser-47, Gly-221, and Gly-223. Residues 173-360 (SVVLVDFGKK…VAMMTNFKEK (188 aa)) enclose the Glutamine amidotransferase type-1 domain. Cys-248 acts as the Nucleophile in catalysis. Residues Leu-249, Gln-252, Asn-290, Gly-292, and Tyr-293 each contribute to the L-glutamine site. Catalysis depends on residues His-333 and Glu-335.

It belongs to the CarA family. Composed of two chains; the small (or glutamine) chain promotes the hydrolysis of glutamine to ammonia, which is used by the large (or ammonia) chain to synthesize carbamoyl phosphate. Tetramer of heterodimers (alpha,beta)4.

The catalysed reaction is hydrogencarbonate + L-glutamine + 2 ATP + H2O = carbamoyl phosphate + L-glutamate + 2 ADP + phosphate + 2 H(+). The enzyme catalyses L-glutamine + H2O = L-glutamate + NH4(+). Its pathway is amino-acid biosynthesis; L-arginine biosynthesis; carbamoyl phosphate from bicarbonate: step 1/1. It functions in the pathway pyrimidine metabolism; UMP biosynthesis via de novo pathway; (S)-dihydroorotate from bicarbonate: step 1/3. Functionally, small subunit of the glutamine-dependent carbamoyl phosphate synthetase (CPSase). CPSase catalyzes the formation of carbamoyl phosphate from the ammonia moiety of glutamine, carbonate, and phosphate donated by ATP, constituting the first step of 2 biosynthetic pathways, one leading to arginine and/or urea and the other to pyrimidine nucleotides. The small subunit (glutamine amidotransferase) binds and cleaves glutamine to supply the large subunit with the substrate ammonia. The protein is Carbamoyl phosphate synthase small chain of Staphylococcus aureus (strain COL).